The chain runs to 113 residues: Nucleoid-associated protein FMG_0513 (113 aa).

The tract at residues 1–44 (MGNKFRGGMPGMGNMGNMMKQMQKMQRQMEETQKRLEETEVTAT) is disordered. The segment covering 15-26 (MGNMMKQMQKMQ) has biased composition (low complexity). Residues 27–38 (RQMEETQKRLEE) are compositionally biased toward basic and acidic residues.

The protein belongs to the YbaB/EbfC family. Homodimer.

Its subcellular location is the cytoplasm. It localises to the nucleoid. In terms of biological role, binds to DNA and alters its conformation. May be involved in regulation of gene expression, nucleoid organization and DNA protection. The sequence is that of Nucleoid-associated protein FMG_0513 from Finegoldia magna (strain ATCC 29328 / DSM 20472 / WAL 2508) (Peptostreptococcus magnus).